A 267-amino-acid chain; its full sequence is Protein LicA (267 aa).

The protein belongs to the peptidase S49 family.

Its function is as follows. Mediates phase variation of the LPS epitopes. Phase variation of H.influenza LPS epitopes expressed by LicA is determined by a translational switch. This Haemophilus influenzae (strain ATCC 51907 / DSM 11121 / KW20 / Rd) protein is Protein LicA (licA).